Reading from the N-terminus, the 212-residue chain is Large ribosomal subunit protein uL3 (212 aa).

Glutamine 153 carries the N5-methylglutamine modification.

Belongs to the universal ribosomal protein uL3 family. Part of the 50S ribosomal subunit. Forms a cluster with proteins L14 and L19. Methylated by PrmB.

One of the primary rRNA binding proteins, it binds directly near the 3'-end of the 23S rRNA, where it nucleates assembly of the 50S subunit. The protein is Large ribosomal subunit protein uL3 of Shewanella denitrificans (strain OS217 / ATCC BAA-1090 / DSM 15013).